We begin with the raw amino-acid sequence, 570 residues long: GTPase Obg (570 aa).

In terms of domain architecture, Obg spans 2–168 (SDFVDRVTVH…RDIILELKSI (167 aa)). The disordered stretch occupies residues 15–43 (GDGGNGSAGIRREKYKPLAGPNGGNGGKG). The OBG-type G domain occupies 169 to 349 (ADVALVGFPS…LNFALAKLVK (181 aa)). GTP contacts are provided by residues 175-182 (GFPSAGKS), 200-204 (FTTLV), 221-224 (DVPG), 301-304 (NKID), and 330-332 (STA). Residues Ser-182 and Thr-202 each coordinate Mg(2+). In terms of domain architecture, OCT spans 382–468 (GRNAQVREFE…ERAVAFDWDP (87 aa)). The segment at 521-570 (RAAMQAERAAGHWADPSIDDDRHDEQSLFGRGEVEEYEDEPGADGSRQLD) is disordered.

It belongs to the TRAFAC class OBG-HflX-like GTPase superfamily. OBG GTPase family. In terms of assembly, monomer. It depends on Mg(2+) as a cofactor.

The protein resides in the cytoplasm. An essential GTPase which binds GTP, GDP and possibly (p)ppGpp with moderate affinity, with high nucleotide exchange rates and a fairly low GTP hydrolysis rate. Plays a role in control of the cell cycle, stress response, ribosome biogenesis and in those bacteria that undergo differentiation, in morphogenesis control. This is GTPase Obg from Bifidobacterium animalis subsp. lactis (strain AD011).